A 75-amino-acid polypeptide reads, in one-letter code: Ribonuclease pancreatic (75 aa).

Intrachain disulfides connect Cys7–Cys65 and Cys46–Cys53. Asn15 is a glycosylation site (N-linked (GlcNAc...) asparagine). Residues 22–26 (KPVNT), Lys47, and Arg66 contribute to the substrate site.

Belongs to the pancreatic ribonuclease family. Monomer. Interacts with and forms tight 1:1 complexes with RNH1. Dimerization of two such complexes may occur. Interaction with RNH1 inhibits this protein. In terms of tissue distribution, pancreas.

It localises to the secreted. It carries out the reaction an [RNA] containing cytidine + H2O = an [RNA]-3'-cytidine-3'-phosphate + a 5'-hydroxy-ribonucleotide-3'-[RNA].. It catalyses the reaction an [RNA] containing uridine + H2O = an [RNA]-3'-uridine-3'-phosphate + a 5'-hydroxy-ribonucleotide-3'-[RNA].. In terms of biological role, endonuclease that catalyzes the cleavage of RNA on the 3' side of pyrimidine nucleotides. Acts on single-stranded and double-stranded RNA. This is Ribonuclease pancreatic (rnase1) from Oryx leucoryx (Arabian oryx).